The sequence spans 173 residues: Large ribosomal subunit protein uL10 (173 aa).

Belongs to the universal ribosomal protein uL10 family. As to quaternary structure, part of the ribosomal stalk of the 50S ribosomal subunit. The N-terminus interacts with L11 and the large rRNA to form the base of the stalk. The C-terminus forms an elongated spine to which L12 dimers bind in a sequential fashion forming a multimeric L10(L12)X complex.

Its function is as follows. Forms part of the ribosomal stalk, playing a central role in the interaction of the ribosome with GTP-bound translation factors. The chain is Large ribosomal subunit protein uL10 from Cupriavidus metallidurans (strain ATCC 43123 / DSM 2839 / NBRC 102507 / CH34) (Ralstonia metallidurans).